The primary structure comprises 449 residues: UDP-N-acetylglucosamine 1-carboxyvinyltransferase (449 aa).

51 to 52 (KN) lines the phosphoenolpyruvate pocket. Residue R121 coordinates UDP-N-acetyl-alpha-D-glucosamine. Catalysis depends on C145, which acts as the Proton donor. A 2-(S-cysteinyl)pyruvic acid O-phosphothioketal modification is found at C145. Residues 150-154 (RPVDQ), D333, and I355 each bind UDP-N-acetyl-alpha-D-glucosamine.

Belongs to the EPSP synthase family. MurA subfamily.

It localises to the cytoplasm. The catalysed reaction is phosphoenolpyruvate + UDP-N-acetyl-alpha-D-glucosamine = UDP-N-acetyl-3-O-(1-carboxyvinyl)-alpha-D-glucosamine + phosphate. It participates in cell wall biogenesis; peptidoglycan biosynthesis. Its function is as follows. Cell wall formation. Adds enolpyruvyl to UDP-N-acetylglucosamine. In Burkholderia mallei (strain ATCC 23344), this protein is UDP-N-acetylglucosamine 1-carboxyvinyltransferase.